The primary structure comprises 302 residues: Probable protein ABIL4 (302 aa).

Disordered stretches follow at residues Pro-151 to Ala-179 and Leu-220 to Phe-256. The span at Ala-161–Asp-170 shows a compositional bias: polar residues.

Belongs to the ABI family. As to quaternary structure, binds SCAR.

It localises to the cytoplasm. It is found in the cytoskeleton. Involved in regulation of actin and microtubule organization. Part of a WAVE complex that activates the Arp2/3 complex. The protein is Probable protein ABIL4 of Oryza sativa subsp. japonica (Rice).